A 351-amino-acid chain; its full sequence is Protein EXPRESSION OF TERPENOIDS 1 (351 aa).

A disordered region spans residues 1–23 (MANFFSLGGNQEQQHQEISSSQA). A compositionally biased stretch (low complexity) spans 11–22 (QEQQHQEISSSQ). Zn(2+) is bound by residues C129, C132, C140, C145, C149, and C156. Positions 129–156 (CQDCGNQAKKDCQHMRCRTCCKSRGFQC) form a DNA-binding region, zn(2)-C6 fungal-type; degenerate. Positions 170–219 (RRERQQQLAALQQQQQGHNNNNNNHKNKRQREDPSASSLVSTRLPSNTNG) are disordered. Residues 175 to 193 (QQLAALQQQQQGHNNNNNN) show a composition bias toward low complexity. The segment covering 204–219 (SASSLVSTRLPSNTNG) has biased composition (polar residues). A Required for homo- and heterodimerization motif is present at residues 258-261 (IGGH). The interval 286-320 (TSSGGSAGGVQHHHHNSAAVATATTTSGGDATAAG) is disordered. Residues 303–320 (AAVATATTTSGGDATAAG) show a composition bias toward low complexity.

It belongs to the SHI protein family. As to quaternary structure, forms homodimers and heterodimers with LRP1.

It is found in the nucleus. Its function is as follows. Transcription activator involved in the transcriptional regulation of terpene biosynthesis in glandular trichomes. Binds to the promoter of the linalool synthase TPS5 and promotes TPS5 gene transactivation. Acts synergistically with MYC1 in the transactivation of TPS5. This chain is Protein EXPRESSION OF TERPENOIDS 1, found in Solanum lycopersicum (Tomato).